We begin with the raw amino-acid sequence, 156 residues long: Aspartate carbamoyltransferase regulatory chain (156 aa).

Residues C109, C114, C140, and C143 each contribute to the Zn(2+) site.

The protein belongs to the PyrI family. Contains catalytic and regulatory chains. Zn(2+) serves as cofactor.

Functionally, involved in allosteric regulation of aspartate carbamoyltransferase. This chain is Aspartate carbamoyltransferase regulatory chain, found in Methanosarcina acetivorans (strain ATCC 35395 / DSM 2834 / JCM 12185 / C2A).